Consider the following 212-residue polypeptide: Putative 3-methyladenine DNA glycosylase (212 aa).

It belongs to the DNA glycosylase MPG family.

In Nocardia farcinica (strain IFM 10152), this protein is Putative 3-methyladenine DNA glycosylase.